Consider the following 486-residue polypeptide: NADH dehydrogenase [ubiquinone] flavoprotein 1, mitochondrial (486 aa).

The N-terminal 30 residues, M1 to F30, are a transit peptide targeting the mitochondrion. The segment covering S31 to T40 has biased composition (low complexity). A disordered region spans residues S31–G57. Residues P41–P50 are compositionally biased toward pro residues. G110–G119 is a binding site for NADH. F222 to T270 lines the FMN pocket. [4Fe-4S] cluster is bound by residues C402, C405, C408, and C448.

The protein belongs to the complex I 51 kDa subunit family. As to quaternary structure, complex I is composed of at least 49 different subunits. This is a component of the flavoprotein-sulfur (FP) fragment of the enzyme. It depends on FMN as a cofactor. [4Fe-4S] cluster is required as a cofactor.

The protein localises to the mitochondrion inner membrane. The enzyme catalyses a ubiquinone + NADH + 5 H(+)(in) = a ubiquinol + NAD(+) + 4 H(+)(out). Its function is as follows. Core subunit of the mitochondrial membrane respiratory chain NADH dehydrogenase (Complex I) that is believed to belong to the minimal assembly required for catalysis. Complex I functions in the transfer of electrons from NADH to the respiratory chain. The immediate electron acceptor for the enzyme is believed to be ubiquinone. This Arabidopsis thaliana (Mouse-ear cress) protein is NADH dehydrogenase [ubiquinone] flavoprotein 1, mitochondrial.